A 237-amino-acid polypeptide reads, in one-letter code: MQLARGTVGGRGCALFPLLSILVVQGARIVLSLEISADAHVRGYVGEKIKLKCTFKSSSDVTDKLTIDWTYRPPSSSRTESIFHYQSFQYPTTAGTFRDRISWAGNVYKGDASISISNPTLKDNGTFSCAVKNPPDVYHNIPLTELTVTERGFGTMLSSVALLSILVFVPSAVVVILLLVRMGRKATGVQKRSRSGYKKSSIEVSDDTDQEDSNDCMTRLCVRCAECLDSDYEEEAY.

Residues 1-32 form the signal peptide; sequence MQLARGTVGGRGCALFPLLSILVVQGARIVLS. In terms of domain architecture, Ig-like V-type spans 33-149; the sequence is LEISADAHVR…NIPLTELTVT (117 aa). At 33 to 159 the chain is on the extracellular side; the sequence is LEISADAHVR…ERGFGTMLSS (127 aa). An intrachain disulfide couples Cys53 to Cys129. An N-linked (GlcNAc...) asparagine glycan is attached at Asn124. Residues 160–180 form a helical membrane-spanning segment; it reads VALLSILVFVPSAVVVILLLV. The Cytoplasmic portion of the chain corresponds to 181–237; sequence RMGRKATGVQKRSRSGYKKSSIEVSDDTDQEDSNDCMTRLCVRCAECLDSDYEEEAY.

The protein belongs to the myelin P0 protein family. In terms of tissue distribution, present in all tissues tested, including the skin. Present in the keratinocytes and sebocytes in the skin (at protein level).

It localises to the membrane. Functionally, mediates homophilic cell-cell adhesion. This is Myelin protein zero-like protein 3 (Mpzl3) from Mus musculus (Mouse).